A 232-amino-acid chain; its full sequence is Ion-translocating oxidoreductase complex subunit E (232 aa).

5 helical membrane passes run 39–59 (LGLG…ISLV), 69–89 (IPVF…LVNA), 93–113 (GLYM…IIIG), 128–148 (AFDG…LGAT), and 182–202 (SFLL…LIAL).

The protein belongs to the NqrDE/RnfAE family. In terms of assembly, the complex is composed of six subunits: RnfA, RnfB, RnfC, RnfD, RnfE and RnfG.

It is found in the cell inner membrane. Functionally, part of a membrane-bound complex that couples electron transfer with translocation of ions across the membrane. This is Ion-translocating oxidoreductase complex subunit E from Shewanella oneidensis (strain ATCC 700550 / JCM 31522 / CIP 106686 / LMG 19005 / NCIMB 14063 / MR-1).